The chain runs to 561 residues: Amidophosphoribosyltransferase 2, chloroplastic (561 aa).

Low complexity predominate over residues 1–27; sequence MAATSSISSSLSLNAKPNKLSNNNNNN. Positions 1 to 36 are disordered; it reads MAATSSISSSLSLNAKPNKLSNNNNNNKPHRFLRNP. Residues 1-53 constitute a chloroplast transit peptide; it reads MAATSSISSSLSLNAKPNKLSNNNNNNKPHRFLRNPFLNPSSSSFSPLPASIS. Cysteine 87 (nucleophile) is an active-site residue. One can recognise a Glutamine amidotransferase type-2 domain in the interval 87–307; the sequence is CGVVGIYGDS…PGEVLVVDKD (221 aa). [4Fe-4S] cluster-binding residues include cysteine 323, cysteine 469, cysteine 520, and cysteine 523.

In the C-terminal section; belongs to the purine/pyrimidine phosphoribosyltransferase family. [4Fe-4S] cluster serves as cofactor. Mg(2+) is required as a cofactor. As to expression, mostly expressed in leaves, and, to a lower extent, in cotyledons.

The protein localises to the plastid. Its subcellular location is the chloroplast stroma. It carries out the reaction 5-phospho-beta-D-ribosylamine + L-glutamate + diphosphate = 5-phospho-alpha-D-ribose 1-diphosphate + L-glutamine + H2O. It functions in the pathway purine metabolism; IMP biosynthesis via de novo pathway; N(1)-(5-phospho-D-ribosyl)glycinamide from 5-phospho-alpha-D-ribose 1-diphosphate: step 1/2. Its activity is regulated as follows. Inhibited by the phenyltriazole acetic acid compound [5-(4-chlorophenyl)-1-isopropyl-1H-[1,2,4]triazol-3-yl]-acetic acid (DAS734), a bleaching herbicide. Functionally, catalyzes the first committed step of 'de novo purine biosynthesis from glutamine. Required for chloroplast biogenesis and cell division. Confers sensitivity to the phenyltriazole acetic acid compound [5-(4-chlorophenyl)-1-isopropyl-1H-[1,2,4]triazol-3-yl]-acetic acid (DAS734), a bleaching herbicide. The polypeptide is Amidophosphoribosyltransferase 2, chloroplastic (ASE2) (Arabidopsis thaliana (Mouse-ear cress)).